A 481-amino-acid chain; its full sequence is Argininosuccinate lyase (481 aa).

It belongs to the lyase 1 family. Argininosuccinate lyase subfamily.

The protein localises to the cytoplasm. It carries out the reaction 2-(N(omega)-L-arginino)succinate = fumarate + L-arginine. It participates in amino-acid biosynthesis; L-arginine biosynthesis; L-arginine from L-ornithine and carbamoyl phosphate: step 3/3. This chain is Argininosuccinate lyase, found in Methanococcus maripaludis (strain C6 / ATCC BAA-1332).